The sequence spans 384 residues: Heparin lyase I (384 aa).

Positions 1–21 (MKKQILYLIVLQQLFLCSAYA) are cleaved as a signal peptide. The residue at position 22 (Q22) is a Blocked amino end (Gln). An O-linked (Man...) serine glycan is attached at S39.

Monomer. In terms of processing, the N-terminus is blocked.

It is found in the periplasm. It carries out the reaction Eliminative cleavage of polysaccharides containing (1-&gt;4)-linked D-glucuronate or L-iduronate residues and (1-&gt;4)-alpha-linked 2-sulfoamino-2-deoxy-6-sulfo-D-glucose residues to give oligosaccharides with terminal 4-deoxy-alpha-D-gluc-4-enuronosyl groups at their non-reducing ends.. Functionally, degrades heparin and heparan sulfate. Also implicated in the release of heparin-bound growth factors from the extracellular matrix. The protein is Heparin lyase I of Pedobacter heparinus (Flavobacterium heparinum).